A 425-amino-acid chain; its full sequence is Gamma-glutamyl phosphate reductase (425 aa).

This sequence belongs to the gamma-glutamyl phosphate reductase family.

Its subcellular location is the cytoplasm. It catalyses the reaction L-glutamate 5-semialdehyde + phosphate + NADP(+) = L-glutamyl 5-phosphate + NADPH + H(+). It functions in the pathway amino-acid biosynthesis; L-proline biosynthesis; L-glutamate 5-semialdehyde from L-glutamate: step 2/2. In terms of biological role, catalyzes the NADPH-dependent reduction of L-glutamate 5-phosphate into L-glutamate 5-semialdehyde and phosphate. The product spontaneously undergoes cyclization to form 1-pyrroline-5-carboxylate. The protein is Gamma-glutamyl phosphate reductase of Symbiobacterium thermophilum (strain DSM 24528 / JCM 14929 / IAM 14863 / T).